The sequence spans 187 residues: Photosystem I assembly protein Ycf4 (187 aa).

The next 2 membrane-spanning stretches (helical) occupy residues Y25–L47 and F62–W84.

The protein belongs to the Ycf4 family.

Its subcellular location is the plastid. It is found in the chloroplast thylakoid membrane. Functionally, seems to be required for the assembly of the photosystem I complex. The protein is Photosystem I assembly protein Ycf4 of Mesostigma viride (Green alga).